Consider the following 900-residue polypeptide: DNA mismatch repair protein MutS (900 aa).

637-644 (GPNMAGKS) is a binding site for ATP.

It belongs to the DNA mismatch repair MutS family.

This protein is involved in the repair of mismatches in DNA. It is possible that it carries out the mismatch recognition step. This protein has a weak ATPase activity. The protein is DNA mismatch repair protein MutS of Methanosarcina mazei (strain ATCC BAA-159 / DSM 3647 / Goe1 / Go1 / JCM 11833 / OCM 88) (Methanosarcina frisia).